We begin with the raw amino-acid sequence, 411 residues long: Lissencephaly-1 homolog (411 aa).

Residues 9–41 (QREELNQAIADYLGSNGYADSLETFRKEADLST) enclose the LisH domain. Positions 56–83 (TSVIRLQKKVMELEAKLTEAEKEVIEGA) form a coiled coil. WD repeat units follow at residues 106–147 (GHRA…RSLK), 148–187 (GHTDSVQDVAFDAQGKLLASCSADLSIKLWDFQQSYECIK), 191–230 (GHDHNVSSVAFVPAGDYVLSASRDRTIKMWEVATGYCVKT), 233–272 (GHREWVRMVRVHIEGSIFATCSNDQTIRVWLTNSKDCKVE), 275–334 (DHEH…CLLT), 337–376 (GHDNWVRGLAFHPGGKYLVSASDDKTIRVWDLRNKRCMKT), and 379–411 (AHQHFCTSIDFHKAHPYVISGSVDQTVKVWECR).

Belongs to the WD repeat LIS1/nudF family.

Its subcellular location is the cytoplasm. The protein localises to the cytoskeleton. The protein resides in the microtubule organizing center. It localises to the centrosome. In terms of biological role, positively regulates the activity of the minus-end directed microtubule motor protein dynein. May enhance dynein-mediated microtubule sliding by targeting dynein to the microtubule plus end. Required for several dynein- and microtubule-dependent processes. This chain is Lissencephaly-1 homolog, found in Drosophila sechellia (Fruit fly).